The sequence spans 77 residues: Tachyplesin-2 (77 aa).

Positions 1-23 are cleaved as a signal peptide; sequence MKKLVIALCLMMVLAVMVEEAEA. 2 disulfide bridges follow: cysteine 26–cysteine 39 and cysteine 30–cysteine 35. Arginine amide is present on arginine 40. Positions 41–77 are excised as a propeptide; the sequence is GKRNEVRQYRDRGYDVRAIPDETFFTRQDEDEDDDEE.

It belongs to the tachyplesin/polyphemusin family. Hemocytes.

The protein localises to the secreted. Functionally, significantly inhibits the growth of Gram-negative and Gram-positive bacteria. The sequence is that of Tachyplesin-2 from Tachypleus tridentatus (Japanese horseshoe crab).